The sequence spans 561 residues: Arginine--tRNA ligase (561 aa).

The 'HIGH' region motif lies at 128–138 (ANPTGPLHVGH).

The protein belongs to the class-I aminoacyl-tRNA synthetase family. Monomer.

It localises to the cytoplasm. The enzyme catalyses tRNA(Arg) + L-arginine + ATP = L-arginyl-tRNA(Arg) + AMP + diphosphate. This is Arginine--tRNA ligase from Methylibium petroleiphilum (strain ATCC BAA-1232 / LMG 22953 / PM1).